Reading from the N-terminus, the 326-residue chain is Phospho-N-acetylmuramoyl-pentapeptide-transferase (326 aa).

Transmembrane regions (helical) follow at residues 3–23 (ISIS…PAFI), 51–71 (TMGG…FALF), 79–99 (VGMI…DDFL), 115–135 (LALQ…GGDI), 138–158 (VFGY…FWLV), 169–189 (GVDG…GVIA), 195–215 (MDIL…FIFN), 221–243 (VFMG…MALH), and 306–326 (FFFW…LYLM).

This sequence belongs to the glycosyltransferase 4 family. MraY subfamily. It depends on Mg(2+) as a cofactor.

It localises to the cell membrane. It catalyses the reaction UDP-N-acetyl-alpha-D-muramoyl-L-alanyl-gamma-D-glutamyl-L-lysyl-D-alanyl-D-alanine + di-trans,octa-cis-undecaprenyl phosphate = Mur2Ac(oyl-L-Ala-gamma-D-Glu-L-Lys-D-Ala-D-Ala)-di-trans,octa-cis-undecaprenyl diphosphate + UMP. The protein operates within cell wall biogenesis; peptidoglycan biosynthesis. Catalyzes the initial step of the lipid cycle reactions in the biosynthesis of the cell wall peptidoglycan: transfers peptidoglycan precursor phospho-MurNAc-pentapeptide from UDP-MurNAc-pentapeptide onto the lipid carrier undecaprenyl phosphate, yielding undecaprenyl-pyrophosphoryl-MurNAc-pentapeptide, known as lipid I. This is Phospho-N-acetylmuramoyl-pentapeptide-transferase from Streptococcus pneumoniae serotype 19F (strain G54).